We begin with the raw amino-acid sequence, 149 residues long: Transcriptional repressor NrdR (149 aa).

Residues 3 to 34 (CPFCSATDTKVIDSRLVAEGHQVRRRRECTEC) fold into a zinc finger. One can recognise an ATP-cone domain in the interval 49–139 (PRVIKRDGTR…VYRAFEDVSE (91 aa)).

It belongs to the NrdR family. The cofactor is Zn(2+).

Its function is as follows. Negatively regulates transcription of bacterial ribonucleotide reductase nrd genes and operons by binding to NrdR-boxes. This Shewanella sp. (strain MR-4) protein is Transcriptional repressor NrdR.